The primary structure comprises 79 residues: RNA-binding protein Hfq (79 aa).

One can recognise a Sm domain in the interval Gly10 to Val69.

It belongs to the Hfq family. Homohexamer.

Its function is as follows. RNA chaperone that binds small regulatory RNA (sRNAs) and mRNAs to facilitate mRNA translational regulation in response to envelope stress, environmental stress and changes in metabolite concentrations. Also binds with high specificity to tRNAs. The polypeptide is RNA-binding protein Hfq (Cupriavidus necator (strain ATCC 17699 / DSM 428 / KCTC 22496 / NCIMB 10442 / H16 / Stanier 337) (Ralstonia eutropha)).